Here is a 121-residue protein sequence, read N- to C-terminus: Large ribosomal subunit protein bL19 (121 aa).

It belongs to the bacterial ribosomal protein bL19 family.

In terms of biological role, this protein is located at the 30S-50S ribosomal subunit interface and may play a role in the structure and function of the aminoacyl-tRNA binding site. This chain is Large ribosomal subunit protein bL19, found in Acidothermus cellulolyticus (strain ATCC 43068 / DSM 8971 / 11B).